An 888-amino-acid polypeptide reads, in one-letter code: C2H2 zinc finger transcription factor sltA (888 aa).

3 disordered regions span residues 1–78 (MSTS…QRSP), 132–176 (IDSQ…SSEN), and 388–407 (RSSM…ASAP). 3 stretches are compositionally biased toward polar residues: residues 23–32 (PSLSASTSIE), 167–176 (GLGTSLSSEN), and 388–397 (RSSMPSNREP). 2 consecutive C2H2-type zinc fingers follow at residues 500–522 (QKCK…EKTH) and 561–586 (YKCK…EKAH). Positions 589 to 663 (DYVRSKHNGR…PTQTGSGDFP (75 aa)) are disordered. Polar residues predominate over residues 602–632 (KASNGATPQTPSIATPSSKAQGITTPLTGSE).

The protein resides in the nucleus. Functionally, transcription factor that contributes to azole resistance by coregulating the expression of the drug target erg11A and the drug efflux pump mdr1. Binds to the 5'-AGGCA-3' motif in the promoters of ergosterol biosynthesis and drug pump genes to regulate their expression. Is able to interact with the promoters of sltA, sltB, erg11A, erg13A, erg24A, mdr1, abcE and mfsC. Involved in antifungal drug resistance to azoles, terbinafine, and simvastatin but not amphotericin B or caspofungin. In Aspergillus fumigatus (strain CBS 144.89 / FGSC A1163 / CEA10) (Neosartorya fumigata), this protein is C2H2 zinc finger transcription factor sltA.